Consider the following 657-residue polypeptide: Pyoverdine export ATP-binding/permease protein PvdT (657 aa).

Residues 6-245 (IDLRNIRKSY…LSANAGALQA (240 aa)) form the ABC transporter domain. 43-50 (GASGSGKS) contacts ATP. 4 helical membrane passes run 285 to 305 (ALTL…LAVG), 532 to 552 (LSLM…IGVM), 590 to 610 (LSVV…GILI), and 620 to 640 (LAAV…FGFM).

The protein belongs to the ABC transporter superfamily. Macrolide exporter (TC 3.A.1.122) family. In terms of assembly, part of the tripartite efflux system PvdRT-OpmQ, which is composed of an inner membrane component with both ATPase and permease domains, PvdT, a periplasmic membrane fusion protein, PvdR, and an outer membrane component, OpmQ.

It localises to the cell inner membrane. Part of the tripartite efflux system PvdRT-OpmQ required for the secretion into the extracellular milieu of the siderophore pyoverdine (PVD), which is involved in iron acquisition. This subunit binds PVD and drives its secretion by hydrolyzing ATP. The system is responsible for export of newly synthesized PVD after the final steps of biosynthesis have taken place in the periplasm. It is also responsible for recycling of PVD after internalization of ferri-PVD into the periplasm by the outer-membrane receptor FpvA and release of iron from PVD, thus making PVD available for new cycles of iron uptake. The protein is Pyoverdine export ATP-binding/permease protein PvdT of Pseudomonas fluorescens (strain ATCC BAA-477 / NRRL B-23932 / Pf-5).